A 349-amino-acid chain; its full sequence is Phosphoribosylformylglycinamidine cyclo-ligase (349 aa).

It belongs to the AIR synthase family.

Its subcellular location is the cytoplasm. The enzyme catalyses 2-formamido-N(1)-(5-O-phospho-beta-D-ribosyl)acetamidine + ATP = 5-amino-1-(5-phospho-beta-D-ribosyl)imidazole + ADP + phosphate + H(+). It participates in purine metabolism; IMP biosynthesis via de novo pathway; 5-amino-1-(5-phospho-D-ribosyl)imidazole from N(2)-formyl-N(1)-(5-phospho-D-ribosyl)glycinamide: step 2/2. The protein is Phosphoribosylformylglycinamidine cyclo-ligase of Psychrobacter arcticus (strain DSM 17307 / VKM B-2377 / 273-4).